The following is a 487-amino-acid chain: UPF0276 protein SAV_2218 (487 aa).

A UPF0276 region spans residues 1–285 (MVEEGTMERL…LGAIRKTLEK (285 aa)). The unknown stretch occupies residues 286–487 (AGTRAGASAG…RATRRVLLRR (202 aa)). Positions 319–348 (AGPRRGGADAQAAPRAAGTEALSAASTSTP) are disordered. Positions 326–348 (ADAQAAPRAAGTEALSAASTSTP) are enriched in low complexity.

In the N-terminal section; belongs to the UPF0276 family.

This is UPF0276 protein SAV_2218 from Streptomyces avermitilis (strain ATCC 31267 / DSM 46492 / JCM 5070 / NBRC 14893 / NCIMB 12804 / NRRL 8165 / MA-4680).